The primary structure comprises 122 residues: Thioredoxin H-type (122 aa).

Residues 2-118 (AAEEGVVIAC…IVKHVGATAA (117 aa)) enclose the Thioredoxin domain. A disulfide bridge connects residues C40 and C43.

It is found in the cytoplasm. In terms of biological role, participates in various redox reactions through the reversible oxidation of the active center dithiol to a disulfide. The H form is known to activate a number of cytosolic enzymes. The protein is Thioredoxin H-type (TRXH) of Oryza sativa subsp. indica (Rice).